The sequence spans 618 residues: UvrABC system protein C (618 aa).

Residues Asp-13–Ile-92 form the GIY-YIG domain. The UVR domain maps to Leu-204–Ile-239.

This sequence belongs to the UvrC family. In terms of assembly, interacts with UvrB in an incision complex.

It is found in the cytoplasm. In terms of biological role, the UvrABC repair system catalyzes the recognition and processing of DNA lesions. UvrC both incises the 5' and 3' sides of the lesion. The N-terminal half is responsible for the 3' incision and the C-terminal half is responsible for the 5' incision. The polypeptide is UvrABC system protein C (Clostridium botulinum (strain ATCC 19397 / Type A)).